The sequence spans 146 residues: UPF0178 protein BCE33L2782 (146 aa).

The protein belongs to the UPF0178 family.

The protein is UPF0178 protein BCE33L2782 of Bacillus cereus (strain ZK / E33L).